The following is a 447-amino-acid chain: Tubulin beta chain (447 aa).

The GTP site is built by Gln11, Glu69, Ser138, Gly142, Thr143, Gly144, Asn204, and Asn226. Glu69 is a binding site for Mg(2+). The interval 425 to 447 (YQDASISEGEEEYEEEVPIEGEE) is disordered. Residues 432–447 (EGEEEYEEEVPIEGEE) are compositionally biased toward acidic residues.

It belongs to the tubulin family. As to quaternary structure, dimer of alpha and beta chains. A typical microtubule is a hollow water-filled tube with an outer diameter of 25 nm and an inner diameter of 15 nM. Alpha-beta heterodimers associate head-to-tail to form protofilaments running lengthwise along the microtubule wall with the beta-tubulin subunit facing the microtubule plus end conferring a structural polarity. Microtubules usually have 13 protofilaments but different protofilament numbers can be found in some organisms and specialized cells. It depends on Mg(2+) as a cofactor.

It localises to the cytoplasm. Its subcellular location is the cytoskeleton. Tubulin is the major constituent of microtubules, a cylinder consisting of laterally associated linear protofilaments composed of alpha- and beta-tubulin heterodimers. Microtubules grow by the addition of GTP-tubulin dimers to the microtubule end, where a stabilizing cap forms. Below the cap, tubulin dimers are in GDP-bound state, owing to GTPase activity of alpha-tubulin. This chain is Tubulin beta chain (tubA), found in Botryotinia fuckeliana (Noble rot fungus).